The following is a 300-amino-acid chain: Protoheme IX farnesyltransferase 1 (300 aa).

9 helical membrane passes run 28–48 (VVALMLLTVLVGMCLAMPTIL), 54–74 (VAGLLGIAMMAGSAAALNHLI), 100–120 (ALLFAALLGSLGFVILYVFTN), 122–142 (LTAWLTFASLIGYALIYTAYL), 149–169 (NIVIGGLAGAMPPLLGWTAVT), 176–196 (ALLLVIIIFLWTPPHFWALAI), 222–242 (CILLYTILLAIACLLPVLVGM), 243–263 (SGPLYFVCSSLLSTGFIYKAW), and 280–300 (FSIYHLMLLFMALLLDHYLWA).

Belongs to the UbiA prenyltransferase family. Protoheme IX farnesyltransferase subfamily.

The protein resides in the cell inner membrane. It carries out the reaction heme b + (2E,6E)-farnesyl diphosphate + H2O = Fe(II)-heme o + diphosphate. It functions in the pathway porphyrin-containing compound metabolism; heme O biosynthesis; heme O from protoheme: step 1/1. In terms of biological role, converts heme B (protoheme IX) to heme O by substitution of the vinyl group on carbon 2 of heme B porphyrin ring with a hydroxyethyl farnesyl side group. This chain is Protoheme IX farnesyltransferase 1, found in Shewanella sp. (strain MR-4).